The sequence spans 394 residues: Bifunctional enzyme IspD/IspF (394 aa).

A 2-C-methyl-D-erythritol 4-phosphate cytidylyltransferase region spans residues methionine 1–valine 230. A 2-C-methyl-D-erythritol 2,4-cyclodiphosphate synthase region spans residues leucine 231–leucine 394. Positions 237 and 239 each coordinate a divalent metal cation. 4-CDP-2-C-methyl-D-erythritol 2-phosphate is bound by residues aspartate 237 to histidine 239 and histidine 263 to serine 264. Residue histidine 271 participates in a divalent metal cation binding. 4-CDP-2-C-methyl-D-erythritol 2-phosphate-binding positions include aspartate 285–glycine 287, phenylalanine 290–aspartate 294, threonine 361–glutamate 364, and phenylalanine 368.

This sequence in the N-terminal section; belongs to the IspD/TarI cytidylyltransferase family. IspD subfamily. In the C-terminal section; belongs to the IspF family. It depends on a divalent metal cation as a cofactor.

It carries out the reaction 2-C-methyl-D-erythritol 4-phosphate + CTP + H(+) = 4-CDP-2-C-methyl-D-erythritol + diphosphate. The enzyme catalyses 4-CDP-2-C-methyl-D-erythritol 2-phosphate = 2-C-methyl-D-erythritol 2,4-cyclic diphosphate + CMP. The protein operates within isoprenoid biosynthesis; isopentenyl diphosphate biosynthesis via DXP pathway; isopentenyl diphosphate from 1-deoxy-D-xylulose 5-phosphate: step 2/6. It participates in isoprenoid biosynthesis; isopentenyl diphosphate biosynthesis via DXP pathway; isopentenyl diphosphate from 1-deoxy-D-xylulose 5-phosphate: step 4/6. Functionally, bifunctional enzyme that catalyzes the formation of 4-diphosphocytidyl-2-C-methyl-D-erythritol from CTP and 2-C-methyl-D-erythritol 4-phosphate (MEP) (IspD), and catalyzes the conversion of 4-diphosphocytidyl-2-C-methyl-D-erythritol 2-phosphate (CDP-ME2P) to 2-C-methyl-D-erythritol 2,4-cyclodiphosphate (ME-CPP) with a corresponding release of cytidine 5-monophosphate (CMP) (IspF). The protein is Bifunctional enzyme IspD/IspF of Desulforudis audaxviator (strain MP104C).